Here is a 426-residue protein sequence, read N- to C-terminus: D-ribulose kinase (426 aa).

Residues Asp-8, 12–15 (SGAR), Ser-72, and Asp-221 each bind substrate. Residues Ser-243, Gly-281, and 376-380 (GGAKN) each bind ATP.

Belongs to the FGGY kinase family. The cofactor is a divalent metal cation.

The catalysed reaction is D-ribulose + ATP = D-ribulose 5-phosphate + ADP + H(+). Its function is as follows. Exhibits ATP hydrolysis without substrate. Phosphorylates D-ribulose. The chain is D-ribulose kinase from Synechococcus elongatus (strain ATCC 33912 / PCC 7942 / FACHB-805) (Anacystis nidulans R2).